A 281-amino-acid polypeptide reads, in one-letter code: AB hydrolase superfamily protein YclE (281 aa).

The 239-residue stretch at 30–268 (SAVYYPRLFS…SGHQPMLEEP (239 aa)) folds into the AB hydrolase-1 domain. Ser95 (nucleophile) is an active-site residue. The active site involves Asp232. Residue His261 is the Proton donor of the active site.

The protein belongs to the AB hydrolase superfamily.

The polypeptide is AB hydrolase superfamily protein YclE (yclE) (Bacillus subtilis (strain 168)).